The primary structure comprises 802 residues: Phenylalanine--tRNA ligase beta subunit (802 aa).

The region spanning 40-155 (SASLKNVVVG…AHVETGVNAI (116 aa)) is the tRNA-binding domain. The region spanning 409–484 (KAVNKIETSL…RIYGYDEIPV (76 aa)) is the B5 domain. Residues aspartate 462, aspartate 468, glutamate 471, and glutamate 472 each contribute to the Mg(2+) site. An FDX-ACB domain is found at 709 to 802 (PRYPEMTRDL…LQEKLNAIIR (94 aa)).

Belongs to the phenylalanyl-tRNA synthetase beta subunit family. Type 1 subfamily. In terms of assembly, tetramer of two alpha and two beta subunits. Mg(2+) serves as cofactor.

It localises to the cytoplasm. The catalysed reaction is tRNA(Phe) + L-phenylalanine + ATP = L-phenylalanyl-tRNA(Phe) + AMP + diphosphate + H(+). This Listeria monocytogenes serovar 1/2a (strain ATCC BAA-679 / EGD-e) protein is Phenylalanine--tRNA ligase beta subunit.